The following is a 147-amino-acid chain: Cyanate hydratase (147 aa).

Catalysis depends on residues Arg88, Glu91, and Ser114.

It belongs to the cyanase family.

It catalyses the reaction cyanate + hydrogencarbonate + 3 H(+) = NH4(+) + 2 CO2. Catalyzes the reaction of cyanate with bicarbonate to produce ammonia and carbon dioxide. In Parasynechococcus marenigrum (strain WH8102), this protein is Cyanate hydratase.